Consider the following 411-residue polypeptide: Serine hydroxymethyltransferase (411 aa).

(6S)-5,6,7,8-tetrahydrofolate contacts are provided by residues Leu-117 and 121–123 (GHL). Position 226 is an N6-(pyridoxal phosphate)lysine (Lys-226).

The protein belongs to the SHMT family. Homodimer. It depends on pyridoxal 5'-phosphate as a cofactor.

It is found in the cytoplasm. It carries out the reaction (6R)-5,10-methylene-5,6,7,8-tetrahydrofolate + glycine + H2O = (6S)-5,6,7,8-tetrahydrofolate + L-serine. It functions in the pathway one-carbon metabolism; tetrahydrofolate interconversion. Its pathway is amino-acid biosynthesis; glycine biosynthesis; glycine from L-serine: step 1/1. Functionally, catalyzes the reversible interconversion of serine and glycine with tetrahydrofolate (THF) serving as the one-carbon carrier. This reaction serves as the major source of one-carbon groups required for the biosynthesis of purines, thymidylate, methionine, and other important biomolecules. Also exhibits THF-independent aldolase activity toward beta-hydroxyamino acids, producing glycine and aldehydes, via a retro-aldol mechanism. This Syntrophobacter fumaroxidans (strain DSM 10017 / MPOB) protein is Serine hydroxymethyltransferase.